Here is a 640-residue protein sequence, read N- to C-terminus: uncharacterized protein (640 aa).

The next 14 membrane-spanning stretches (helical) occupy residues 8–28, 52–72, 90–110, 136–156, 179–199, 208–228, 241–261, 277–297, 298–318, 352–372, 391–411, 446–466, 497–517, and 619–639; these read GGVV…LGMF, LGGF…CYLI, LFVA…FLLA, LWYA…LVVL, VFML…LHAW, PSPV…YGIV, WWGL…VLQA, ENMG…DTGA, YGPA…HAAF, TVFF…AGFV, IVAL…GLSV, AIAA…APMV, IAPG…AVLA, and GSVH…LVVA.

It belongs to the complex I subunit 4 family.

Its subcellular location is the cell membrane. This is an uncharacterized protein from Mycobacterium tuberculosis (strain CDC 1551 / Oshkosh).